An 858-amino-acid polypeptide reads, in one-letter code: Leucine--tRNA ligase (858 aa).

A 'HIGH' region motif is present at residues 42–52 (PYPSGRLHMGH). The short motif at 618–622 (KMSKS) is the 'KMSKS' region element. Residue lysine 621 participates in ATP binding.

Belongs to the class-I aminoacyl-tRNA synthetase family.

It localises to the cytoplasm. The enzyme catalyses tRNA(Leu) + L-leucine + ATP = L-leucyl-tRNA(Leu) + AMP + diphosphate. The sequence is that of Leucine--tRNA ligase from Aliivibrio fischeri (strain ATCC 700601 / ES114) (Vibrio fischeri).